The sequence spans 66 residues: Photosystem II reaction center protein J (66 aa).

Residues 1–25 (MSGKKSPYPDGRIPDRNPDGTPAVP) form a disordered region. Residues 37 to 57 (LWLVATAGGMAVLFVVGLFFY) traverse the membrane as a helical segment.

Belongs to the PsbJ family. In terms of assembly, PSII is composed of 1 copy each of membrane proteins PsbA, PsbB, PsbC, PsbD, PsbE, PsbF, PsbH, PsbI, PsbJ, PsbK, PsbL, PsbM, PsbT, PsbX, PsbY, PsbZ, Psb30/Ycf12, peripheral proteins PsbO, CyanoQ (PsbQ), PsbU, PsbV and a large number of cofactors. It forms dimeric complexes.

It is found in the cellular thylakoid membrane. Functionally, one of the components of the core complex of photosystem II (PSII). PSII is a light-driven water:plastoquinone oxidoreductase that uses light energy to abstract electrons from H(2)O, generating O(2) and a proton gradient subsequently used for ATP formation. It consists of a core antenna complex that captures photons, and an electron transfer chain that converts photonic excitation into a charge separation. In Synechococcus sp. (strain CC9605), this protein is Photosystem II reaction center protein J.